Here is a 328-residue protein sequence, read N- to C-terminus: tRNA uridine(34) hydroxylase (328 aa).

Residues 130–224 form the Rhodanese domain; that stretch reads LDKDTVVLDT…YGKDPEVQGE (95 aa). Residue Cys184 is the Cysteine persulfide intermediate of the active site.

Belongs to the TrhO family.

It carries out the reaction uridine(34) in tRNA + AH2 + O2 = 5-hydroxyuridine(34) in tRNA + A + H2O. Catalyzes oxygen-dependent 5-hydroxyuridine (ho5U) modification at position 34 in tRNAs. This chain is tRNA uridine(34) hydroxylase, found in Streptococcus pneumoniae (strain Hungary19A-6).